We begin with the raw amino-acid sequence, 60 residues long: Large ribosomal subunit protein bL32 (60 aa).

A disordered region spans residues 1–60; it reads MAVQQNKKSPSKRGMHRSHDFLVNPSTAIEPTTGETHLRHHISPNGFYRGRKVLKTKADE. Over residues 24 to 35 the composition is skewed to polar residues; that stretch reads NPSTAIEPTTGE. Over residues 49 to 60 the composition is skewed to basic residues; the sequence is RGRKVLKTKADE.

It belongs to the bacterial ribosomal protein bL32 family.

The polypeptide is Large ribosomal subunit protein bL32 (Bordetella petrii (strain ATCC BAA-461 / DSM 12804 / CCUG 43448)).